A 430-amino-acid polypeptide reads, in one-letter code: Probable beta-1,3-galactosyl-O-glycosyl-glycoprotein beta-1,6-N-acetylglucosaminyltransferase 7 (430 aa).

The Cytoplasmic segment spans residues 1–8 (MSQLRATK). Residues 9-25 (SGLVVRAVICIFIFLYL) traverse the membrane as a helical; Signal-anchor for type II membrane protein segment. The Extracellular segment spans residues 26-430 (RNPTPAESEE…QSHFNMRLNR (405 aa)). Cystine bridges form between C53–C205, C139–C354, C160–C187, and C363–C395. An N-linked (GlcNAc...) asparagine glycan is attached at N87. N272 is a glycosylation site (N-linked (GlcNAc...) asparagine).

This sequence belongs to the glycosyltransferase 14 family.

It is found in the golgi apparatus membrane. The protein operates within protein modification; protein glycosylation. In terms of biological role, probable glycosyltransferase. The chain is Probable beta-1,3-galactosyl-O-glycosyl-glycoprotein beta-1,6-N-acetylglucosaminyltransferase 7 from Homo sapiens (Human).